A 55-amino-acid chain; its full sequence is Large ribosomal subunit protein bL33 (55 aa).

It belongs to the bacterial ribosomal protein bL33 family.

The polypeptide is Large ribosomal subunit protein bL33 (Deinococcus geothermalis (strain DSM 11300 / CIP 105573 / AG-3a)).